Consider the following 238-residue polypeptide: Ribonuclease PH (238 aa).

Residues R86 and 124-126 contribute to the phosphate site; that span reads GTR.

The protein belongs to the RNase PH family. In terms of assembly, homohexameric ring arranged as a trimer of dimers.

The catalysed reaction is tRNA(n+1) + phosphate = tRNA(n) + a ribonucleoside 5'-diphosphate. In terms of biological role, phosphorolytic 3'-5' exoribonuclease that plays an important role in tRNA 3'-end maturation. Removes nucleotide residues following the 3'-CCA terminus of tRNAs; can also add nucleotides to the ends of RNA molecules by using nucleoside diphosphates as substrates, but this may not be physiologically important. Probably plays a role in initiation of 16S rRNA degradation (leading to ribosome degradation) during starvation. In Actinobacillus pleuropneumoniae serotype 5b (strain L20), this protein is Ribonuclease PH.